The following is a 1700-amino-acid chain: Rho guanine nucleotide exchange factor 28 (1700 aa).

The tract at residues 288 to 335 (TERATMPSGAAETEEEVRNLESGRSPSEEEEDGQLVKSQADGPSEQED) is disordered. A phosphoserine mark is found at Ser-312, Ser-314, and Ser-478. Residues 483-525 (VADSEEEGRSEPPICYAVGSQSSPRTGLPGGDELDSFDANTEP) form a disordered region. At Ser-623 the chain carries Phosphoserine. A Phorbol-ester/DAG-type zinc finger spans residues 651–698 (RHQFVPGTFSGVLQCSGCDKTLLGKESLQCANCKANTHKGCKDTVPPC). The segment covering 709–720 (NKPQTILGSSSV) has biased composition (polar residues). Disordered regions lie at residues 709-761 (NKPQ…VPGT) and 774-799 (ESEG…GSSP). A compositionally biased stretch (low complexity) spans 728-737 (LSLHPSPSMP). The span at 774-783 (ESEGDSNSWR) shows a compositional bias: polar residues. The 196-residue stretch at 848-1043 (KRQDVIFELM…KDMIAAVDLK (196 aa)) folds into the DH domain. Residues 1085-1187 (ALLHDGLVYW…WMRRIQQAVE (103 aa)) enclose the PH domain. The tract at residues 1186–1207 (VESCPEEEGGRTSESDEERRKA) is disordered. The span at 1193 to 1207 (EGGRTSESDEERRKA) shows a compositional bias: basic and acidic residues. The segment at 1294 to 1303 (DVSQPSEEGP) is interaction with PTK2/FAK1; required for regulation of axonal branching and synapse formation. The tract at residues 1369 to 1380 (IIQAIQNLTRLL) is mediates cytoplasmic retention and interaction with YWHAH. The interaction with microtubules stretch occupies residues 1421–1700 (QEKSRYLEKH…DGAEENIVYL (280 aa)). Residues 1473-1522 (ERECQSQEELLLRHRSELDHQLQEYQQNLERLREGQRMVERERQRMRDQQ) are a coiled coil. Residues 1493-1524 (QLQEYQQNLERLREGQRMVERERQRMRDQQGL) are RNA-binding. Position 1535 is a phosphoserine (Ser-1535). The interval 1563-1576 (FLNDAFTHMSLNTS) is mediates cytoplasmic retention and interaction with MAPK8IP1. The segment at 1574–1598 (NTSNKPNPSGAPWDAHPPGGSHLDL) is disordered. Ser-1604 is modified (phosphoserine). The tract at residues 1612-1700 (VSQPSDVNSE…DGAEENIVYL (89 aa)) is disordered. Over residues 1613-1623 (SQPSDVNSELW) the composition is skewed to polar residues. Basic and acidic residues predominate over residues 1633 to 1642 (ARQESIKDSC). Residues 1647-1672 (DLNSFQTESPDPQDSNQRGPQPQTLI) are compositionally biased toward polar residues.

In terms of assembly, homooligomer; forms cytoplasmic aggregates. Forms a complex with MAPK8 and MAPK8IP1. Interacts with RHOA. Interacts with microtubules. Interacts with YWHAE and YWHAH. Interacts with PTK2/FAK1. Interacts with NEFL. Interacts with CTNND2; prevents interaction with RHOA. In terms of processing, phosphorylated on tyrosine upon stimulation of cells by laminin.

Its subcellular location is the cytoplasm. It localises to the cell membrane. Functions as a RHOA-specific guanine nucleotide exchange factor regulating signaling pathways downstream of integrins and growth factor receptors. Functions in axonal branching, synapse formation and dendritic morphogenesis. Also functions in focal adhesion formation, cell motility and B-lymphocytes activation. May regulate NEFL expression and aggregation and play a role in apoptosis. The polypeptide is Rho guanine nucleotide exchange factor 28 (Arhgef28) (Rattus norvegicus (Rat)).